We begin with the raw amino-acid sequence, 68 residues long: Phylloseptin-SP1 (68 aa).

The N-terminal stretch at 1–22 (MAFLKKSLFLVLFLGLVSLSIC) is a signal peptide. A propeptide spanning residues 23-45 (EEKERETKEEENEQEDDNREEKR) is cleaved from the precursor. The residue at position 67 (Leu-67) is a Leucine amide.

In terms of tissue distribution, expressed by the skin glands.

Its subcellular location is the secreted. Its function is as follows. Weak cationic amphipathic alpha-helical antimicrobial peptide with weak activity against Gram-positive and Gram-negative bacteria and fungi. Has been tested against E.coli (MIC&gt;217.69 uM), S.aureus (MIC&gt;217.69 uM), K.pneumoniae (MIC&gt;189.00 uM) and C.albicans (MIC&gt;217.69 uM). Shows a moderate hemolytic activity. This Agalychnis spurrelli (Gliding leaf frog) protein is Phylloseptin-SP1.